Here is a 449-residue protein sequence, read N- to C-terminus: Type 3 secretion system ATPase (449 aa).

178 to 183 contributes to the ATP binding site; it reads GCGKTT.

This sequence belongs to the ATPase alpha/beta chains family. T3SS ATPase subfamily. As to quaternary structure, the core secretion machinery of the T3SS is composed of approximately 20 different proteins, including cytoplasmic components, a base, an export apparatus and a needle. This subunit is part of the cytosolic complex. Forms homododecamers.

The protein localises to the cytoplasm. It catalyses the reaction ATP + H2O + cellular proteinSide 1 = ADP + phosphate + cellular proteinSide 2.. ATPase component of the type III secretion system (T3SS), also called injectisome, which is used to inject bacterial effector proteins into eukaryotic host cells. Acts as a molecular motor to provide the energy that is required for the export of proteins. Required for type III secretion apparatus (T3SA) formation, proper protein secretion, host cell invasion and virulence. May play a critical role in T3SS substrate recognition, disassembly of the effector/chaperone complex and unfolding of the effector in an ATP-dependent manner prior to secretion. The chain is Type 3 secretion system ATPase from Pseudomonas syringae pv. syringae.